The chain runs to 486 residues: 2-succinylbenzoate--CoA ligase (486 aa).

Belongs to the ATP-dependent AMP-binding enzyme family. MenE subfamily.

It catalyses the reaction 2-succinylbenzoate + ATP + CoA = 2-succinylbenzoyl-CoA + AMP + diphosphate. The protein operates within quinol/quinone metabolism; 1,4-dihydroxy-2-naphthoate biosynthesis; 1,4-dihydroxy-2-naphthoate from chorismate: step 5/7. It functions in the pathway quinol/quinone metabolism; menaquinone biosynthesis. In terms of biological role, converts 2-succinylbenzoate (OSB) to 2-succinylbenzoyl-CoA (OSB-CoA). The sequence is that of 2-succinylbenzoate--CoA ligase from Bacillus subtilis (strain 168).